We begin with the raw amino-acid sequence, 410 residues long: MKEELLKRFTKYVKVDTQSNEESKACPTTPGQMELANILVTELKEIGMQEVTVDEFGYVMATLPSNTTKEVPVIGFLAHLDTATDLTGKNVQPQVHENYDGKDIVLNKDLNVVLSPKQFPELADYNGKTLITTDGTTLLGADDKAGITEIMVAMNYLINHPEIKHGKIRVAFTPDEEIGRGPERFDVEAFGAKYAYTMDGGPLGELEYESFNAAGAKITFNGNSVHPGTAKNKMVNAVKMAMEFNAHIPKDEAPEYTEGYEGFYHLISLNGDVEQAKAYYIIRDFDHLKFVERKTHIASIAKELEEKYGEGSVELKLNDQYYNMREKIEPVKEIVDIVSAAMRNLDIEPKISPIRGGTDGAQLSYKGLPTPNIFGGGENFHGKFEYVALESMVKATEVIIEVARLFEEKE.

Histidine 79 contributes to the Zn(2+) binding site. Aspartate 81 is an active-site residue. A Zn(2+)-binding site is contributed by aspartate 142. The Proton acceptor role is filled by glutamate 176. Zn(2+) is bound by residues glutamate 177, aspartate 199, and histidine 381.

The protein belongs to the peptidase M20B family. Requires Zn(2+) as cofactor.

The protein resides in the cytoplasm. The catalysed reaction is Release of the N-terminal residue from a tripeptide.. Functionally, cleaves the N-terminal amino acid of tripeptides. The protein is Peptidase T of Listeria monocytogenes serotype 4b (strain F2365).